An 842-amino-acid chain; its full sequence is Cullin-8 (842 aa).

A required for interaction with MMS1 region spans residues 1 to 50 (MINESVSKREGFHESISRETSASNALGLYNKFNDERNPRYRTMIAELHEF). The segment covering 755-765 (LQSSNTGGERT) has biased composition (polar residues). Residues 755-775 (LQSSNTGGERTSSAHHEGSNS) form a disordered region. Lys791 is covalently cross-linked (Glycyl lysine isopeptide (Lys-Gly) (interchain with G-Cter in NEDD8)).

This sequence belongs to the cullin family. As to quaternary structure, component of multiple cullin-RING ligases (CRLs) composed of 4 subunits: the RING protein HRT1, the cullin RTT101, a linker protein MMS1, and one of many alternative substrate receptors belonging to a protein family described as DCAF (DDB1- and CUL4-associated factor). Component of a RTT101(MMS1-MMS22) complex with the substrate receptor MMS22. This complex further interacts with RTT107 and CTF4 to form RTT101-MMS1-MMS22-RTT107 and RTT101-MMS1-MMS22-CTF4 complexes respectively. Component of a RTT101(MSS1-CRT10) complex with the substrate receptor CRT10. Component of a RTT101(MSS1-ESC2) complex with the potential substrate receptor ESC2. Component of a RTT101(MSS1-ORC5) complex with the potential substrate receptor ORC5. Interacts (via C-ter) with HRT1; required for ubiquitin-ligase activity. Interacts (via N-ter) with MMS1. In terms of processing, neddylated. HRT1-binding is necessary for RUB1/NEDD8 modification of RTT101. The modification enhances ubiquitin-ligase activity.

The protein localises to the cytoplasm. It localises to the nucleus. It participates in protein modification; protein ubiquitination. Functionally, core component of multiple cullin-RING-based E3 ubiquitin-protein ligase complexes (CRLs), which mediate the ubiquitination of target proteins. As a scaffold protein may contribute to catalysis through positioning of the substrate and the ubiquitin-conjugating enzyme. The CRL associates with CDC34 as the E2 ubiquitin-conjugating enzyme. The functional specificity of the CRL depends on the type of the associated substrate receptor protein. RTT101(MMS1-MMS22) promotes fork progression through damaged DNA or natural pause sites by stabilizing replication proteins like the replication fork-pausing complex (FPC) and leading-strand polymerase at stalled replication forks. RTT101(MMS1-MMS22) ubiquitinates the acetylated histones H3K56ac-H4 at lysine residues H3K121, H3K122 and H3K125. Ubiquitination is required for efficient histone deposition during replication-coupled nucleosome assembly, probably by facilitating the transfer of H3-H4 from ASF1 to other chaperones involved in histone deposition. RTT101(MMS1-CRT10) may regulate nucleotide synthesis through transcriptional regulation of ribonucleotide reductase. RTT101(MMS1) is also involved in the non-functional rRNA decay (NRD) of 25S rRNA through the selective, ubiquitination-dependent degradation of nonfunctional ribosomal particles. Ubiquitinates the FACT (facilitates chromatin transcription) complex subunit SPT16 in an MMS1-independent manner. Involved in regulation of Ty1 transposition and protects the genome from Ty1 integration upstream of tRNA genes. This is Cullin-8 (RTT101) from Saccharomyces cerevisiae (strain ATCC 204508 / S288c) (Baker's yeast).